A 306-amino-acid chain; its full sequence is Protein YIPF1 (306 aa).

Topologically, residues Met1–Asp119 are cytoplasmic. The tract at residues Asn14–Asp62 is disordered. Positions Ala15 to Asn29 are enriched in polar residues. A compositionally biased stretch (acidic residues) spans Glu50–Asp59. Residues Leu120–Leu140 form a helical membrane-spanning segment. Topologically, residues Ser141–Ser162 are lumenal. The helical transmembrane segment at Ile163–Leu183 threads the bilayer. Residues Met184–Glu200 lie on the Cytoplasmic side of the membrane. A helical transmembrane segment spans residues Ile201–Ile221. Residues Pro222–Arg227 lie on the Lumenal side of the membrane. The chain crosses the membrane as a helical span at residues Trp228 to Pro248. At Ala249–Arg256 the chain is on the cytoplasmic side. Residues Val257–Leu277 traverse the membrane as a helical segment. Over Ala278–Ser306 the chain is Lumenal. Asn297 carries an N-linked (GlcNAc...) asparagine glycan.

Belongs to the YIP1 family. As to quaternary structure, interacts with YIPF6; this interaction may stabilize YIPF1. May also form a ternary complex with YIPF2 and YIPF6.

It localises to the golgi apparatus. Its subcellular location is the cis-Golgi network membrane. It is found in the trans-Golgi network membrane. The protein localises to the late endosome membrane. The chain is Protein YIPF1 (YIPF1) from Pongo abelii (Sumatran orangutan).